A 287-amino-acid chain; its full sequence is UBX domain-containing protein 1 (287 aa).

The UBA domain maps to 1–42 (MAECSTLESLIEMGFSPSRAEKALAATGNQGIEPAMDWLVEH). The segment at 44 to 207 (DDPDIDEPSV…VQEPPTKKEY (164 aa)) is disordered. Composition is skewed to basic and acidic residues over residues 72-114 (CEER…EQEK) and 129-169 (KIQE…ERAR). Positions 72 to 164 (CEERLPLTEE…RVREKIARDK (93 aa)) form a coiled coil. The segment covering 176–197 (SEPISPPAEASIPATTPSPSSP) has biased composition (low complexity). One can recognise a UBX domain in the interval 205-284 (KEYDQCRIQV…GLVPSAVLIV (80 aa)).

It is found in the cytoplasm. Functionally, component of a complex required to couple deglycosylation and proteasome-mediated degradation of misfolded proteins in the endoplasmic reticulum that are retrotranslocated in the cytosol. Involved in ubiquitin-proteasome systems. The polypeptide is UBX domain-containing protein 1 (ubxn1) (Xenopus tropicalis (Western clawed frog)).